Consider the following 279-residue polypeptide: Pantothenate synthetase (279 aa).

Position 26 to 33 (Met26 to His33) interacts with ATP. Catalysis depends on His33, which acts as the Proton donor. Gln57 provides a ligand contact to (R)-pantoate. Gln57 lines the beta-alanine pocket. Gly143 to Asp146 contacts ATP. Residue Gln149 coordinates (R)-pantoate. Residues Val172 and Leu180–Arg183 each bind ATP.

It belongs to the pantothenate synthetase family. Homodimer.

The protein resides in the cytoplasm. The enzyme catalyses (R)-pantoate + beta-alanine + ATP = (R)-pantothenate + AMP + diphosphate + H(+). It participates in cofactor biosynthesis; (R)-pantothenate biosynthesis; (R)-pantothenate from (R)-pantoate and beta-alanine: step 1/1. Catalyzes the condensation of pantoate with beta-alanine in an ATP-dependent reaction via a pantoyl-adenylate intermediate. This chain is Pantothenate synthetase, found in Nitrosospira multiformis (strain ATCC 25196 / NCIMB 11849 / C 71).